The sequence spans 72 residues: ATP synthase subunit c (72 aa).

Transmembrane regions (helical) follow at residues 1–21 (MSLG…GAGI) and 49–69 (FIGV…AFIV).

It belongs to the ATPase C chain family. F-type ATPases have 2 components, F(1) - the catalytic core - and F(0) - the membrane proton channel. F(1) has five subunits: alpha(3), beta(3), gamma(1), delta(1), epsilon(1). F(0) has three main subunits: a(1), b(2) and c(10-14). The alpha and beta chains form an alternating ring which encloses part of the gamma chain. F(1) is attached to F(0) by a central stalk formed by the gamma and epsilon chains, while a peripheral stalk is formed by the delta and b chains.

The protein localises to the cell membrane. In terms of biological role, f(1)F(0) ATP synthase produces ATP from ADP in the presence of a proton or sodium gradient. F-type ATPases consist of two structural domains, F(1) containing the extramembraneous catalytic core and F(0) containing the membrane proton channel, linked together by a central stalk and a peripheral stalk. During catalysis, ATP synthesis in the catalytic domain of F(1) is coupled via a rotary mechanism of the central stalk subunits to proton translocation. Functionally, key component of the F(0) channel; it plays a direct role in translocation across the membrane. A homomeric c-ring of between 10-14 subunits forms the central stalk rotor element with the F(1) delta and epsilon subunits. The chain is ATP synthase subunit c from Bacillus anthracis (strain A0248).